A 285-amino-acid polypeptide reads, in one-letter code: Bis(5'-nucleosyl)-tetraphosphatase, symmetrical (285 aa).

The protein belongs to the Ap4A hydrolase family.

The catalysed reaction is P(1),P(4)-bis(5'-adenosyl) tetraphosphate + H2O = 2 ADP + 2 H(+). Hydrolyzes diadenosine 5',5'''-P1,P4-tetraphosphate to yield ADP. The polypeptide is Bis(5'-nucleosyl)-tetraphosphatase, symmetrical (Colwellia psychrerythraea (strain 34H / ATCC BAA-681) (Vibrio psychroerythus)).